A 99-amino-acid chain; its full sequence is L-rhamnose mutarotase (99 aa).

Position 18 (tyrosine 18) interacts with substrate. Histidine 22 serves as the catalytic Proton donor. Residues tyrosine 41 and 76–77 (WW) contribute to the substrate site.

Belongs to the rhamnose mutarotase family. In terms of assembly, homodimer.

It is found in the cytoplasm. The enzyme catalyses alpha-L-rhamnose = beta-L-rhamnose. The protein operates within carbohydrate metabolism; L-rhamnose metabolism. Involved in the anomeric conversion of L-rhamnose. The polypeptide is L-rhamnose mutarotase (Shigella boydii serotype 18 (strain CDC 3083-94 / BS512)).